Reading from the N-terminus, the 183-residue chain is UPF0725 protein At4g11700 (183 aa).

Belongs to the UPF0725 (EMB2204) family.

The chain is UPF0725 protein At4g11700 from Arabidopsis thaliana (Mouse-ear cress).